A 324-amino-acid polypeptide reads, in one-letter code: Mitochondrial thiamine pyrophosphate carrier 1 (324 aa).

Solcar repeat units follow at residues 12–110, 119–205, and 212–307; these read GNRI…ISSA, PQPV…LRSP, and PFGT…VLGL. 6 helical membrane-spanning segments follow: residues 15-35, 79-99, 125-145, 182-202, 218-238, and 282-299; these read IQVV…VAPL, ITGL…YGGI, FISG…LDLL, TAAI…YEAL, AGAG…LDLV, and GLTV…VTMW.

Belongs to the mitochondrial carrier (TC 2.A.29) family.

It is found in the mitochondrion inner membrane. Mitochondrial transporter that mediates uptake of thiamine pyrophosphate (ThPP) into mitochondria. The sequence is that of Mitochondrial thiamine pyrophosphate carrier 1 (TPC1) from Ajellomyces capsulatus (strain NAm1 / WU24) (Darling's disease fungus).